Reading from the N-terminus, the 735-residue chain is MAADGYLPDWLEDTLSEGIRQWWKLKPGPPPPKPAERHKDDSRGLVLPGYKYLGPFNGLDKGEPVNEADAAALEHDKAYDRQLDSGDNPYLKYNHADAEFQERLKEDTSFGGNLGRAVFQAKKRVLEPLGLVEEPVKTAPGKKRPVEHSPVEPDSSSGTGKAGQQPARKRLNFGQTGDADSVPDPQPLGQPPAAPSGLGTNTMATGSGAPMADNNEGADGVGNSSGNWHCDSTWMGDRVITTSTRTWALPTYNNHLYKQISSQSGASNDNHYFGYSTPWGYFDFNRFHCHFSPRDWQRLINNNWGFRPKRLNFKLFNIQVKEVTQNDGTTTIANNLTSTVQVFTDSEYQLPYVLGSAHQGCLPPFPADVFMVPQYGYLTLNNGSQAVGRSSFYCLEYFPSQMLRTGNNFTFSYTFEDVPFHSSYAHSQSLDRLMNPLIDQYLYYLSRTNTPSGTTTQSRLQFSQAGASDIRDQSRNWLPGPCYRQQRVSKTSADNNNSEYSWTGATKYHLNGRDSLVNPGPAMASHKDDEEKFFPQSGVLIFGKQGSEKTNVDIEKVMITDEEEIRTTNPVATEQYGSVSTNLQRGNRQAATADVNTQGVLPGMVWQDRDVYLQGPIWAKIPHTDGHFHPSPLMGGFGLKHPPPQILIKNTPVPANPSTTFSAAKFASFITQYSTGQVSVEIEWELQKENSKRWNPEIQYTSNYNKSVNVDFTVDTNGVYSEPRPIGTRYLTRNL.

Residues 22–44 (WWKLKPGPPPPKPAERHKDDSRG) are disordered. A compositionally biased stretch (basic and acidic residues) spans 34–43 (PAERHKDDSR). Residues 52-97 (YLGPFNGLDKGEPVNEADAAALEHDKAYDRQLDSGDNPYLKYNHAD) are phospholipase A2-like. The segment at 136–224 (VKTAPGKKRP…NEGADGVGNS (89 aa)) is disordered. Over residues 184–194 (DPQPLGQPPAA) the composition is skewed to pro residues.

This sequence belongs to the parvoviridae capsid protein family.

It is found in the virion. The protein resides in the host nucleus. The protein localises to the host nucleolus. In terms of biological role, capsid protein self-assembles to form an icosahedral capsid with a T=1 symmetry, about 22 nm in diameter, and consisting of 60 copies of three size variants of the capsid protein VP1, VP2 and VP3 which differ in their N-terminus. The capsid encapsulates the genomic ssDNA. Binds to host cell heparan sulfate and uses host ITGA5-ITGB1 as coreceptor on the cell surface to provide virion attachment to target cell. This attachment induces virion internalization predominantly through clathrin-dependent endocytosis. Binding to the host receptor also induces capsid rearrangements leading to surface exposure of VP1 N-terminus, specifically its phospholipase A2-like region and putative nuclear localization signal(s). VP1 N-terminus might serve as a lipolytic enzyme to breach the endosomal membrane during entry into host cell and might contribute to virus transport to the nucleus. The sequence is that of Capsid protein VP1 (VP1) from Adeno-associated virus 2 (isolate Srivastava/1982) (AAV-2).